The sequence spans 294 residues: Formate dehydrogenase, nitrate-inducible, iron-sulfur subunit (294 aa).

The Periplasmic portion of the chain corresponds to 1-256 (MAMETQDIIK…DTSVSLWKGA (256 aa)). 4Fe-4S ferredoxin-type domains lie at 30 to 58 (VAKL…IRDE), 91 to 123 (LEWL…QYAN), 124 to 153 (GIVD…LNKE), and 158 to 189 (YKCT…FGTK). Cys39, Cys42, Cys45, Cys49, Cys100, Cys103, Cys108, Cys112, Cys133, Cys136, Cys139, Cys143, Cys160, Cys163, Cys175, and Cys179 together coordinate [4Fe-4S] cluster. A helical membrane pass occupies residues 257–279 (LKPLAAAGFIATFAGLIFHYIGI). Residues 280-294 (GPNKEVDDDEEDHHE) lie on the Cytoplasmic side of the membrane.

As to quaternary structure, trimer of heterotrimers, consisting of subunits alpha, beta and gamma. [4Fe-4S] cluster is required as a cofactor.

The protein resides in the cell inner membrane. In terms of biological role, formate dehydrogenase allows E.coli to use formate as major electron donor during anaerobic respiration, when nitrate is used as electron acceptor. The beta subunit FdnH is an electron transfer unit containing 4 iron-sulfur clusters; it serves as a conduit for electrons that are transferred from the formate oxidation site in the alpha subunit (FdnG) to the menaquinone associated with the gamma subunit (FdnI) of formate dehydrogenase-N. Formate dehydrogenase-N is part of a system that generates proton motive force, together with the dissimilatory nitrate reductase (Nar). The protein is Formate dehydrogenase, nitrate-inducible, iron-sulfur subunit (fdnH) of Escherichia coli (strain K12).